Here is a 637-residue protein sequence, read N- to C-terminus: ATP-dependent zinc metalloprotease FtsH (637 aa).

Over 1 to 6 the chain is Cytoplasmic; that stretch reads MNNQGR. Residues 7 to 27 form a helical membrane-spanning segment; it reads SILAWAALFIFVILLFNVFQS. The Periplasmic segment spans residues 28 to 103; the sequence is DGLLGVRNNI…VVPLETRMNT (76 aa). The chain crosses the membrane as a helical span at residues 104 to 124; the sequence is FLGFLISWFPMLLLIGVWVFF. Residues 125 to 637 are Cytoplasmic-facing; the sequence is MRQMHGGGKA…TKAQKENIAS (513 aa). Residue 195–202 coordinates ATP; sequence GPPGTGKT. Residue His-417 participates in Zn(2+) binding. Residue Glu-418 is part of the active site. Residues His-421 and Asp-495 each contribute to the Zn(2+) site. The disordered stretch occupies residues 617 to 637; that stretch reads DKEKLHEKTKTTKAQKENIAS.

This sequence in the central section; belongs to the AAA ATPase family. The protein in the C-terminal section; belongs to the peptidase M41 family. As to quaternary structure, homohexamer. It depends on Zn(2+) as a cofactor.

The protein localises to the cell inner membrane. Its function is as follows. Acts as a processive, ATP-dependent zinc metallopeptidase for both cytoplasmic and membrane proteins. Plays a role in the quality control of integral membrane proteins. The sequence is that of ATP-dependent zinc metalloprotease FtsH from Rickettsia typhi (strain ATCC VR-144 / Wilmington).